We begin with the raw amino-acid sequence, 844 residues long: Striatin-interacting proteins 2 (844 aa).

A compositionally biased stretch (low complexity) spans 1–18 (MDDPAAPGPAGSPANDNG). The tract at residues 1 to 58 (MDDPAAPGPAGSPANDNGNGNGNGNGNGNGGKGKPAVPKGRETFRNQRRESEGSVDCP) is disordered. Residues 19–33 (NGNGNGNGNGNGGKG) show a composition bias toward gly residues. The segment covering 39-52 (KGRETFRNQRRESE) has biased composition (basic and acidic residues). Phosphoserine occurs at positions 328, 339, and 364. Residues 331-355 (SYTLDLGESQLAPPPSKLRGRRGSR) form a disordered region. The tract at residues 370–422 (ERDLFKTEEPATEEEEESAADGERTLDGELDLLEQDPLVPPPPSQTPLSTDRV) is disordered. The span at 379 to 389 (PATEEEEESAA) shows a compositional bias: acidic residues.

This sequence belongs to the STRIP family. Part of the core of STRIPAK complexes composed of PP2A catalytic and scaffolding subunits, the striatins (PP2A regulatory subunits), the striatin-associated proteins MOB4, STRIP1 and STRIP2, PDCD10 and members of the STE20 kinases, such as STK24 and STK26. Interacts with CTTNBP2NL.

It is found in the cytoplasm. Plays a role in the regulation of cell morphology and cytoskeletal organization. Required in the control of cell shape. Calmodulin-binding scaffolding protein which is the center of the striatin-interacting phosphatase and kinase (STRIPAK) complexes. STRIPAK complexes have critical roles in protein (de)phosphorylation and are regulators of multiple signaling pathways including Hippo, MAPK, nuclear receptor and cytoskeleton remodeling. Different types of STRIPAK complexes are involved in a variety of biological processes such as cell growth, differentiation, apoptosis, metabolism and immune regulation. The chain is Striatin-interacting proteins 2 (Strip2) from Mus musculus (Mouse).